Reading from the N-terminus, the 415-residue chain is ATP-dependent RNA helicase RhlB (415 aa).

Positions 9-37 (QRFSDLSLHPIVRDTLAKKGFDFCTPIQA) match the Q motif motif. Residues 40–218 (LPISLNGRDV…FEDMNDPEYI (179 aa)) form the Helicase ATP-binding domain. Residue 53 to 60 (AQTGTGKT) coordinates ATP. Positions 164–167 (DEAD) match the DEAD box motif. One can recognise a Helicase C-terminal domain in the interval 241–389 (DKMALLLTLM…VSQYETEALL (149 aa)).

The protein belongs to the DEAD box helicase family. RhlB subfamily. Component of the RNA degradosome, which is a multiprotein complex involved in RNA processing and mRNA degradation.

Its subcellular location is the cytoplasm. The catalysed reaction is ATP + H2O = ADP + phosphate + H(+). In terms of biological role, DEAD-box RNA helicase involved in RNA degradation. Has RNA-dependent ATPase activity and unwinds double-stranded RNA. In Haemophilus influenzae (strain PittEE), this protein is ATP-dependent RNA helicase RhlB.